We begin with the raw amino-acid sequence, 660 residues long: Bifunctional polymyxin resistance protein ArnA (660 aa).

A formyltransferase ArnAFT region spans residues 1-304 (MKTVVFAYHD…TLGLVQGSRL (304 aa)). A (6R)-10-formyltetrahydrofolate-binding site is contributed by 86–88 (HLI). The active-site Proton donor; for formyltransferase activity is the His104. (6R)-10-formyltetrahydrofolate contacts are provided by residues Arg114 and 136–140 (VKRAD). Residues 314-660 (RRTRVLILGV…RTVDLTDKPS (347 aa)) are dehydrogenase ArnADH. Residues Asp347 and 368–369 (DI) contribute to the NAD(+) site. UDP-alpha-D-glucuronate-binding positions include Ala393, Tyr398, and 432–433 (TS). Glu434 acts as the Proton acceptor; for decarboxylase activity in catalysis. UDP-alpha-D-glucuronate contacts are provided by residues Arg460, Asn492, 526 to 535 (KLIDGGKQKR), and Tyr613. Arg619 functions as the Proton donor; for decarboxylase activity in the catalytic mechanism.

The protein in the N-terminal section; belongs to the Fmt family. UDP-L-Ara4N formyltransferase subfamily. It in the C-terminal section; belongs to the NAD(P)-dependent epimerase/dehydratase family. UDP-glucuronic acid decarboxylase subfamily. As to quaternary structure, homohexamer, formed by a dimer of trimers.

The enzyme catalyses UDP-alpha-D-glucuronate + NAD(+) = UDP-beta-L-threo-pentopyranos-4-ulose + CO2 + NADH. The catalysed reaction is UDP-4-amino-4-deoxy-beta-L-arabinose + (6R)-10-formyltetrahydrofolate = UDP-4-deoxy-4-formamido-beta-L-arabinose + (6S)-5,6,7,8-tetrahydrofolate + H(+). It participates in nucleotide-sugar biosynthesis; UDP-4-deoxy-4-formamido-beta-L-arabinose biosynthesis; UDP-4-deoxy-4-formamido-beta-L-arabinose from UDP-alpha-D-glucuronate: step 1/3. It functions in the pathway nucleotide-sugar biosynthesis; UDP-4-deoxy-4-formamido-beta-L-arabinose biosynthesis; UDP-4-deoxy-4-formamido-beta-L-arabinose from UDP-alpha-D-glucuronate: step 3/3. Its pathway is bacterial outer membrane biogenesis; lipopolysaccharide biosynthesis. Functionally, bifunctional enzyme that catalyzes the oxidative decarboxylation of UDP-glucuronic acid (UDP-GlcUA) to UDP-4-keto-arabinose (UDP-Ara4O) and the addition of a formyl group to UDP-4-amino-4-deoxy-L-arabinose (UDP-L-Ara4N) to form UDP-L-4-formamido-arabinose (UDP-L-Ara4FN). The modified arabinose is attached to lipid A and is required for resistance to polymyxin and cationic antimicrobial peptides. This chain is Bifunctional polymyxin resistance protein ArnA, found in Shigella boydii serotype 4 (strain Sb227).